The sequence spans 332 residues: MRNHRISLQDIATLAGVTKMTVSRYIRSPKKVAKETGERIAKIMEEINYIPNRAPGMLLNAQSYTLGILIPSFQNQLFADILAGIESVTSEHNYQTLIANYNYDRDSEEESVINLLSYNIDGIILSEKYHTIRTVKFLRSATIPVVELMDVQGERLDMEVGFDNRQAAFDMVCTMLEKRVRHKILYLGSKDDTRDEQRYQGYCDAMMLHNLSPLRMNPRAISSIHLGMQLMRDALSANPDLDGVFCTNDDIAMGALLLCRERNLAVPEQISIAGFHGLEIGRQMIPSLASVITPRFDIGRMAAQMLLSKIKNNDHNHNTVDLGYQIYHGNTL.

Residues 6–60 enclose the HTH lacI-type domain; that stretch reads ISLQDIATLAGVTKMTVSRYIRSPKKVAKETGERIAKIMEEINYIPNRAPGMLLN. A DNA-binding region (H-T-H motif) is located at residues 8–27; the sequence is LQDIATLAGVTKMTVSRYIR.

Functionally, idn operon regulator. May repress gntKU and gntT genes when growing on L-idonate. The chain is HTH-type transcriptional regulator IdnR (idnR) from Escherichia coli (strain K12).